The following is a 436-amino-acid chain: Voltage-gated potassium channel regulatory subunit KCNG3 (436 aa).

Topologically, residues 1–168 (MTFGRSGAAS…RTFEEPTSSL (168 aa)) are cytoplasmic. A helical membrane pass occupies residues 169–190 (AAQILASVSVVFVIVSMVVLCA). Topologically, residues 191–220 (STLPDWRNAAADNRSLDDRSRYSAGPGREP) are extracellular. A helical transmembrane segment spans residues 221 to 242 (SGIIEAICIGWFTAECIVRFIV). At 243-253 (SKNKCEFVKRP) the chain is on the cytoplasmic side. Residues 254–274 (LNIIDLLAITPYYISVLMTVF) form a helical membrane-spanning segment. Over 275 to 284 (TGENSQLQRA) the chain is Extracellular. The chain crosses the membrane as a helical; Voltage-sensor span at residues 285–305 (GVTLRVLRMMRIFWVIKLARH). Residues 306–320 (FIGLQTLGLTLKRCY) lie on the Cytoplasmic side of the membrane. A helical membrane pass occupies residues 321–342 (REMVMLLVFICVAMAIFSALSQ). Residues 343-360 (LLEHGLDLETSNKDFTSI) are Extracellular-facing. The helical intramembrane region spans 361–372 (PAACWWVIISMT). A Selectivity filter motif is present at residues 373 to 378 (TVGYGD). Residues 373-380 (TVGYGDMY) lie within the membrane without spanning it. At 381–387 (PITVPGR) the chain is on the extracellular side. Residues 388–416 (ILGGVCVVSGIVLLALPITFIYHSFVQCY) form a helical membrane-spanning segment. The Cytoplasmic portion of the chain corresponds to 417 to 436 (HELKFRSARYSRSLSTEFLN).

Belongs to the potassium channel family. G (TC 1.A.1.2) subfamily. Kv6.3/KCNG3 sub-subfamily. Heterotetramer with KCNB1. Does not form homomultimers. Expressed in the brain, liver, testis, small intestine, colon, thymus and adrenal gland.

The protein localises to the cell membrane. Its subcellular location is the cytoplasm. Regulatory subunit of the voltage-gated potassium (Kv) channel which, when coassembled with KCNB1, modulates the kinetics parameters of the heterotetrameric channel namely the inactivation and deactivation rate. Potassium channel subunit that does not form functional channels by itself. Reduces the deactivation rate. Moderately accelerates activation. The protein is Voltage-gated potassium channel regulatory subunit KCNG3 of Homo sapiens (Human).